We begin with the raw amino-acid sequence, 625 residues long: Probable inactive receptor kinase At5g16590 (625 aa).

The first 23 residues, Met1–Ser23, serve as a signal peptide directing secretion. LRR repeat units lie at residues Lys88 to Thr111, Leu112 to Leu134, Asn136 to Ala158, Arg160 to Leu182, and Gln183 to Pro204. A helical transmembrane segment spans residues Ala246–Phe266. The Protein kinase domain occupies Lys343–Val613. Ser345 is modified (phosphoserine). Residues Leu349–Ser357 and Lys371 each bind ATP. Ser422 is modified (phosphoserine). Residues Thr442 and Thr496 each carry the phosphothreonine modification. Ser517 bears the Phosphoserine mark. Thr593 carries the phosphothreonine modification. 2 positions are modified to phosphoserine: Ser619 and Ser624.

The protein belongs to the protein kinase superfamily. Ser/Thr protein kinase family.

Its subcellular location is the cell membrane. In terms of biological role, might be involved in early recognition of growth promoting fungi. Appears to be specific for P.indica. This Arabidopsis thaliana (Mouse-ear cress) protein is Probable inactive receptor kinase At5g16590.